A 121-amino-acid chain; its full sequence is Cell division protein FtsB (121 aa).

Over 1–6 (MRNWRW) the chain is Cytoplasmic. A helical transmembrane segment spans residues 7-24 (LLLVLAVLLAWLQYRFWF). Residues 25–121 (GPGNSGEVMM…PEPVDPVDHP (97 aa)) are Periplasmic-facing. A coiled-coil region spans residues 31 to 66 (EVMMLEAQVAHQTQDNEGLRQRNQALAAEVKDLKDG). Positions 98-121 (APASAEASAPAQQAPEPVDPVDHP) are disordered. Low complexity predominate over residues 99–113 (PASAEASAPAQQAPE).

It belongs to the FtsB family. As to quaternary structure, part of a complex composed of FtsB, FtsL and FtsQ.

Its subcellular location is the cell inner membrane. Functionally, essential cell division protein. May link together the upstream cell division proteins, which are predominantly cytoplasmic, with the downstream cell division proteins, which are predominantly periplasmic. The sequence is that of Cell division protein FtsB from Xanthomonas axonopodis pv. citri (strain 306).